The chain runs to 850 residues: Receptor-like serine/threonine-protein kinase SD1-8 (850 aa).

The signal sequence occupies residues 1–26 (MRGLPNFYHSYTFFFFFLLILFPAYS). The Extracellular segment spans residues 27 to 441 (ISANTLSASE…LEDKRNRSAK (415 aa)). One can recognise a Bulb-type lectin domain in the interval 31–153 (TLSASESLTI…KNSAPDGVLW (123 aa)). Asparagine 43, asparagine 118, and asparagine 242 each carry an N-linked (GlcNAc...) asparagine glycan. An EGF-like domain is found at 292 to 328 (PKDQCDEYKECGVYGYCDSNTSPVCNCIKGFKPRNPQ). Intrachain disulfides connect cysteine 296–cysteine 308, cysteine 302–cysteine 316, cysteine 378–cysteine 403, and cysteine 382–cysteine 388. Residues 347–428 (CGGGDGFVRL…GGQDLYVRLA (82 aa)) enclose the PAN domain. Asparagine 387 and asparagine 437 each carry an N-linked (GlcNAc...) asparagine glycan. A helical membrane pass occupies residues 442–462 (IIGSSIGVSVLLLLSFIIFFL). Residues 463–850 (WKRKQKRSIL…QITVSVLDAR (388 aa)) are Cytoplasmic-facing. Residues 526–807 (FSNANKLGQG…LMLGSESTTI (282 aa)) form the Protein kinase domain. Residues 532-540 (LGQGGFGIV) and lysine 554 each bind ATP. Residues 615 to 632 (SRNSKLNWQMRFDIINGI) are caM-binding. Aspartate 651 functions as the Proton acceptor in the catalytic mechanism.

The protein belongs to the protein kinase superfamily. Ser/Thr protein kinase family. As to quaternary structure, interacts with PUB9, PUB13, PUB14 and PUB38. As to expression, expressed in the root-hypocotyl transition zone, at the base of lateral roots, axillary buds and pedicels.

It is found in the cell membrane. The enzyme catalyses L-seryl-[protein] + ATP = O-phospho-L-seryl-[protein] + ADP + H(+). The catalysed reaction is L-threonyl-[protein] + ATP = O-phospho-L-threonyl-[protein] + ADP + H(+). In terms of biological role, involved in the regulation of cellular expansion and differentiation. The polypeptide is Receptor-like serine/threonine-protein kinase SD1-8 (SD18) (Arabidopsis thaliana (Mouse-ear cress)).